Here is a 257-residue protein sequence, read N- to C-terminus: Thiazole synthase (257 aa).

K100 (schiff-base intermediate with DXP) is an active-site residue. 1-deoxy-D-xylulose 5-phosphate-binding positions include G161, 187–188 (AG), and 209–210 (NT).

Belongs to the ThiG family. As to quaternary structure, homotetramer. Forms heterodimers with either ThiH or ThiS.

The protein localises to the cytoplasm. It catalyses the reaction [ThiS sulfur-carrier protein]-C-terminal-Gly-aminoethanethioate + 2-iminoacetate + 1-deoxy-D-xylulose 5-phosphate = [ThiS sulfur-carrier protein]-C-terminal Gly-Gly + 2-[(2R,5Z)-2-carboxy-4-methylthiazol-5(2H)-ylidene]ethyl phosphate + 2 H2O + H(+). The protein operates within cofactor biosynthesis; thiamine diphosphate biosynthesis. Functionally, catalyzes the rearrangement of 1-deoxy-D-xylulose 5-phosphate (DXP) to produce the thiazole phosphate moiety of thiamine. Sulfur is provided by the thiocarboxylate moiety of the carrier protein ThiS. In vitro, sulfur can be provided by H(2)S. This Zymomonas mobilis subsp. mobilis (strain ATCC 31821 / ZM4 / CP4) protein is Thiazole synthase.